A 594-amino-acid polypeptide reads, in one-letter code: Protein FAM200C (594 aa).

This chain is Protein FAM200C (FAM200C), found in Bos taurus (Bovine).